The following is a 376-amino-acid chain: UDP-N-acetylglucosamine--N-acetylmuramyl-(pentapeptide) pyrophosphoryl-undecaprenol N-acetylglucosamine transferase (376 aa).

Residues Thr-12–Gly-14, Asn-125, Arg-165, Ser-197, and Gln-296 each bind UDP-N-acetyl-alpha-D-glucosamine.

Belongs to the glycosyltransferase 28 family. MurG subfamily.

Its subcellular location is the cell inner membrane. The catalysed reaction is di-trans,octa-cis-undecaprenyl diphospho-N-acetyl-alpha-D-muramoyl-L-alanyl-D-glutamyl-meso-2,6-diaminopimeloyl-D-alanyl-D-alanine + UDP-N-acetyl-alpha-D-glucosamine = di-trans,octa-cis-undecaprenyl diphospho-[N-acetyl-alpha-D-glucosaminyl-(1-&gt;4)]-N-acetyl-alpha-D-muramoyl-L-alanyl-D-glutamyl-meso-2,6-diaminopimeloyl-D-alanyl-D-alanine + UDP + H(+). The protein operates within cell wall biogenesis; peptidoglycan biosynthesis. Functionally, cell wall formation. Catalyzes the transfer of a GlcNAc subunit on undecaprenyl-pyrophosphoryl-MurNAc-pentapeptide (lipid intermediate I) to form undecaprenyl-pyrophosphoryl-MurNAc-(pentapeptide)GlcNAc (lipid intermediate II). The sequence is that of UDP-N-acetylglucosamine--N-acetylmuramyl-(pentapeptide) pyrophosphoryl-undecaprenol N-acetylglucosamine transferase from Protochlamydia amoebophila (strain UWE25).